The sequence spans 531 residues: UPF0159 protein CPn_0746/CP_1126/CPj0746/CpB0774 (531 aa).

2 consecutive ThyX domains span residues 38–274 (KGAL…AEPH) and 309–511 (PSVQ…FKFV).

It belongs to the UPF0159 family.

The sequence is that of UPF0159 protein CPn_0746/CP_1126/CPj0746/CpB0774 from Chlamydia pneumoniae (Chlamydophila pneumoniae).